The chain runs to 87 residues: Probable Fe(2+)-trafficking protein (87 aa).

The protein belongs to the Fe(2+)-trafficking protein family. In terms of assembly, monomer.

Could be a mediator in iron transactions between iron acquisition and iron-requiring processes, such as synthesis and/or repair of Fe-S clusters in biosynthetic enzymes. The sequence is that of Probable Fe(2+)-trafficking protein from Buchnera aphidicola subsp. Baizongia pistaciae (strain Bp).